The following is a 237-amino-acid chain: Capsid protein (237 aa).

The tract at residues 1–26 (MNTLIQGPDHPSNAMSSRANNRSNNS) is disordered. A compositionally biased stretch (low complexity) spans 12–26 (SNAMSSRANNRSNNS).

This sequence belongs to the alphamovirus/ilarvirus capsid protein family.

The protein localises to the virion. Capsid protein self-assembles to form an icosahedral capsid with a T=3 symmetry, about 29 nm in diameter, and consisting of 12 capsid protein pentamers and 20 capsid protein hexamers. Binds to the to the 3' end of the nonpolyadenylated viral RNA and is involved in viral RNA translation initiation. Probably binds RNA and plays a role in packaging. This chain is Capsid protein, found in Asparagus officinalis (Garden asparagus).